Here is a 688-residue protein sequence, read N- to C-terminus: Protein sel-1 homolog 2 (688 aa).

The first 23 residues, 1–23 (MKPLSLLIEILIILGVTIKTIKA), serve as a signal peptide directing secretion. Residues 24–662 (EEHNKRQKER…RWNWLKLDNT (639 aa)) are Extracellular-facing. N34 is a glycosylation site (N-linked (GlcNAc...) asparagine). Sel1-like repeat units follow at residues 107–142 (GDQL…DMGN), 143–178 (LKAM…KEGS), 179–214 (CKAQ…AGGN), 215–250 (MMSQ…DYIA), 297–333 (VQIQ…KAGS), 334–370 (ANAM…SKGN), 371–406 (AIGL…EKGW), 407–442 (PDAQ…QSGQ), 443–478 (PLAI…ELGH), 551–586 (AFAR…NKYH), and 588–623 (AQAM…QTSP). The chain crosses the membrane as a helical span at residues 663–683 (IGPHWDLFVIGLIVPGLILLL). The Cytoplasmic segment spans residues 684–688 (RNHHG).

This sequence belongs to the sel-1 family.

It is found in the membrane. The protein localises to the cell projection. The protein resides in the cilium. It localises to the nucleus speckle. The chain is Protein sel-1 homolog 2 (SEL1L2) from Homo sapiens (Human).